The chain runs to 148 residues: uncharacterized protein (148 aa).

The protein to A.tumefaciens Atu0565/AGR_C_992.

This is an uncharacterized protein from Rhizobium meliloti (strain 1021) (Ensifer meliloti).